Reading from the N-terminus, the 423-residue chain is Gamma-glutamyl phosphate reductase (423 aa).

Belongs to the gamma-glutamyl phosphate reductase family.

The protein localises to the cytoplasm. It carries out the reaction L-glutamate 5-semialdehyde + phosphate + NADP(+) = L-glutamyl 5-phosphate + NADPH + H(+). It functions in the pathway amino-acid biosynthesis; L-proline biosynthesis; L-glutamate 5-semialdehyde from L-glutamate: step 2/2. Its function is as follows. Catalyzes the NADPH-dependent reduction of L-glutamate 5-phosphate into L-glutamate 5-semialdehyde and phosphate. The product spontaneously undergoes cyclization to form 1-pyrroline-5-carboxylate. The polypeptide is Gamma-glutamyl phosphate reductase (Pseudomonas fluorescens (strain Pf0-1)).